Here is an 878-residue protein sequence, read N- to C-terminus: MYDSRGVALHSELIHRWNHAFSILSIVAFPKKRLLFAGSQDSKILVFDLPTYNLIHTIRLGESQEETHTRSSVLCLTGSEDENFLFSGGADSLVRIWSIGEKTIRDDFLPVTEIATVYSVTDIGDIFSLAYLDSLETIVFGCQNASLLYVENLIQKIEKKSSDGVENINKLPHRRYDKFFDSLGPTGYSSNSLSQTSLTSLQENCGAAIIEVPSENIIKYAHYGFIYSINKLCPRFNQLLEKSSRTSGAEHIISSAGDGISKLWEFSKDKGQNTVKISLINDKIDNEDSVISQTIEFPFLYCGLTDGIIKIWDLNTQQIISTLKTKHESDVISISVYMDHVFAIDESGITHFYQNQVNHWNPQQGKILSSEIFSKSNAGSVSLLTGGSDGSLTLWDITSLLSAVPLSSNSPINASSTLQTTNLWAAYQSASLNNEEMLNTLRELISFQTVSQSKDTTNTLSLRRCAIYLQQLFLKFGATNSQLFPLPDGGNPVVFAYFQGNGKVSQVKGAKKKRILWYGHYDVISSGNTFNWNTDPFTLTCENGYLKGRGVSDNKGPLVSAIHSVAYLFQQGELVNDVVFLVEGSEEIGSASLKQVCEKYHDIIGKDIDWILLSNSTWVDQEHPCLNYGLRGVINAQIKVWSDKPDGHSGLNGGVYDEPMVNLVKIVSKLQNEQNEIMIPNFYSPLKDLTEEEYQRFQKITELANIDENTTVQDLITNWTKPSLSMTTVKFSGPGNITVIPKSVTMGISIRLVPEQSVEQVKRDLKAYLEESFKQLKSQNHLEIKVLNEAEGWLGDPTNHAYQILKDEITTAWDVEPLLVREGGSISCLRMLERIFDAPAVQIPCGQSTDNGHLANENLRIKNWSNLTEILSKVFNRL.

WD repeat units lie at residues 18–57 (NHAFSILSIVAFPKKRLLFAGSQDSKILVFDLPTYNLIHT), 68–107 (HTRSSVLCLTGSEDENFLFSGGADSLVRIWSIGEKTIRDD), 235–274 (RFNQLLEKSSRTSGAEHIISSAGDGISKLWEFSKDKGQNT), 282–322 (DKID…IIST), and 362–405 (PQQG…SAVP). His-520 contributes to the Zn(2+) binding site. Residue Asp-522 is part of the active site. Asp-553 serves as a coordination point for Zn(2+). Residue Glu-586 is the Proton acceptor of the active site. Glu-587 provides a ligand contact to Zn(2+). The WD 6 repeat unit spans residues 608-651 (IDWILLSNSTWVDQEHPCLNYGLRGVINAQIKVWSDKPDGHSGL). Residue His-853 participates in Zn(2+) binding.

It belongs to the peptidase M20A family. In terms of assembly, component of the GSH degradosomal complex composed of at least DUG1, DUG2 and DUG3. It depends on Zn(2+) as a cofactor.

It is found in the cytoplasm. The protein resides in the nucleus. Component of the GSH degradosomal complex involved in the degradation of glutathione (GSH) and other peptides containing a gamma-glu-X bond. The polypeptide is Probable di- and tripeptidase DUG2 (DUG2) (Saccharomyces cerevisiae (strain ATCC 204508 / S288c) (Baker's yeast)).